The sequence spans 127 residues: Glycine cleavage system H protein (127 aa).

The region spanning 24 to 105 (AALVGITDFA…YGEGWLVKIR (82 aa)) is the Lipoyl-binding domain. At Lys65 the chain carries N6-lipoyllysine.

The protein belongs to the GcvH family. In terms of assembly, the glycine cleavage system is composed of four proteins: P, T, L and H. (R)-lipoate serves as cofactor.

The glycine cleavage system catalyzes the degradation of glycine. The H protein shuttles the methylamine group of glycine from the P protein to the T protein. This is Glycine cleavage system H protein from Chlorobium limicola (strain DSM 245 / NBRC 103803 / 6330).